The primary structure comprises 238 residues: Protein shisa-3 homolog (238 aa).

An N-terminal signal peptide occupies residues 1–21 (MGALLAFCLLVGLLRWGPAGA). Residues 22–98 (QQPGEYCHGW…GITAQPVYVP (77 aa)) are Lumenal-facing. A helical transmembrane segment spans residues 99 to 119 (FLIVGSIFIAFIILGSLVAIY). Residues 120-238 (CCTCLRPKEP…GKSCPDFSSS (119 aa)) lie on the Cytoplasmic side of the membrane.

It belongs to the shisa family.

The protein resides in the endoplasmic reticulum membrane. Plays an essential role in the maturation of presomitic mesoderm cells by individual attenuation of both FGF and WNT signaling. In Mus musculus (Mouse), this protein is Protein shisa-3 homolog (Shisa3).